The sequence spans 163 residues: Neurotrophin-3 (163 aa).

The signal sequence occupies residues 1–3 (IQS). The propeptide occupies 4–119 (TSMDQGILTE…ALNRTSRRKR (116 aa)). Disordered regions lie at residues 38–60 (ARTK…ATAS) and 90–131 (LLSE…YSVC). N-linked (GlcNAc...) asparagine glycosylation occurs at asparagine 112.

It belongs to the NGF-beta family.

Its subcellular location is the secreted. Functionally, seems to promote the survival of visceral and proprioceptive sensory neurons. In Eunectes notaeus (Yellow anaconda), this protein is Neurotrophin-3 (NTF3).